The primary structure comprises 305 residues: Putative HTH-type transcriptional regulatory protein Saci_1344 (305 aa).

The region spanning 128 to 183 (LREKREEKNMSLGELSQRLGVSRISVYDYEKEDSYVSIEVAEKLIEIFGDEVIGDI) is the HTH cro/C1-type domain. The H-T-H motif DNA-binding region spans 139–158 (LGELSQRLGVSRISVYDYEK).

This Sulfolobus acidocaldarius (strain ATCC 33909 / DSM 639 / JCM 8929 / NBRC 15157 / NCIMB 11770) protein is Putative HTH-type transcriptional regulatory protein Saci_1344.